The primary structure comprises 276 residues: Glutamate racemase (276 aa).

Residues 9-10 and 41-42 contribute to the substrate site; these read DS and YG. The active-site Proton donor/acceptor is the Cys72. Residue 73 to 74 participates in substrate binding; sequence NT. Cys183 (proton donor/acceptor) is an active-site residue. A substrate-binding site is contributed by 184 to 185; it reads TH.

This sequence belongs to the aspartate/glutamate racemases family.

It catalyses the reaction L-glutamate = D-glutamate. Its pathway is cell wall biogenesis; peptidoglycan biosynthesis. Its function is as follows. Provides the (R)-glutamate required for cell wall biosynthesis. This Shouchella clausii (strain KSM-K16) (Alkalihalobacillus clausii) protein is Glutamate racemase.